A 48-amino-acid chain; its full sequence is Large ribosomal subunit protein bL32c (48 aa).

Belongs to the bacterial ribosomal protein bL32 family.

Its subcellular location is the plastid. The protein resides in the chloroplast. In Vicia faba (Broad bean), this protein is Large ribosomal subunit protein bL32c (rpl32).